We begin with the raw amino-acid sequence, 984 residues long: Mast/stem cell growth factor receptor Kit (984 aa).

The N-terminal stretch at 1-21 is a signal peptide; the sequence is MEYHWILLCVSLCFTFHPGDT. At 22-514 the chain is on the extracellular side; that stretch reads KPTITPAGTY…RTISHDLFSP (493 aa). Ig-like C2-type domains are found at residues 23-97, 98-197, 203-300, 311-395, and 398-498; these read PTIT…ERAS, IYIY…LTVR, PPVI…VWLD, PVNN…ASVN, and FTIF…QAFT. 4 disulfide bridges follow: Cys44–Cys87, Cys129–Cys178, Cys144–Cys175, and Cys226–Cys284. Asn227, Asn260, Asn314, Asn351, Asn395, Asn448, and Asn476 each carry an N-linked (GlcNAc...) asparagine glycan. A disulfide bridge connects residues Cys421 and Cys487. The chain crosses the membrane as a helical span at residues 515–535; it reads LLIGSVSAACILCLILIVLFY. At 536–984 the chain is on the cytoplasmic side; that stretch reads KYMQKPKYQI…GTEPFRVQRV (449 aa). Tyr558 provides a ligand contact to Mg(2+). 2 positions are modified to phosphotyrosine; by autocatalysis: Tyr558 and Tyr560. One can recognise a Protein kinase domain in the interval 579-926; that stretch reads LRFGKTLGSG…LSDTTKHIYL (348 aa). ATP contacts are provided by residues 586–593, Lys613, and 661–667; these read GSGAFGKV and EYCCFGD. Phosphotyrosine; by autocatalysis is present on residues Tyr690 and Tyr707. The span at 711–723 shows a compositional bias: low complexity; that stretch reads RPSAAGKPSSSSS. The segment at 711-749 is disordered; the sequence is RPSAAGKPSSSSSSEKRRSLREGSPYVEEDSESEMFDED. Residues 737-749 show a composition bias toward acidic residues; it reads VEEDSESEMFDED. Asp781 serves as the catalytic Proton acceptor. Arg785 contacts ATP. Asn786 and Asp799 together coordinate Mg(2+). Tyr812 and Tyr925 each carry phosphotyrosine; by autocatalysis. The disordered stretch occupies residues 936–963; the sequence is PRGREESSTHSMASQPFNSAGNNSPPSR. Polar residues predominate over residues 944–960; the sequence is THSMASQPFNSAGNNSP.

The protein belongs to the protein kinase superfamily. Tyr protein kinase family. CSF-1/PDGF receptor subfamily. Post-translationally, ubiquitinated. Rapidly ubiquitinated after autophosphorylation induced by kitlg/scf binding, leading to internalization and degradation. In terms of processing, autophosphorylated on tyrosine residues. Phosphorylated tyrosine residues are important for interaction with specific binding partners.

The protein localises to the cell membrane. It carries out the reaction L-tyrosyl-[protein] + ATP = O-phospho-L-tyrosyl-[protein] + ADP + H(+). Its function is as follows. Tyrosine-protein kinase that acts as a cell-surface receptor for the cytokine kitlg/scf and plays an essential role in the regulation of cell survival and proliferation, hematopoiesis, stem cell maintenance, gametogenesis, mast cell development, migration and function, and in melanogenesis. The chain is Mast/stem cell growth factor receptor Kit (kit) from Takifugu rubripes (Japanese pufferfish).